Consider the following 408-residue polypeptide: UDP-N-acetylglucosamine--N-acetylmuramyl-(pentapeptide) pyrophosphoryl-undecaprenol N-acetylglucosamine transferase (408 aa).

The tract at residues M1–G20 is disordered. Residues T41–G43, N160, R197, S231, and Q327 each bind UDP-N-acetyl-alpha-D-glucosamine.

The protein belongs to the glycosyltransferase 28 family. MurG subfamily.

Its subcellular location is the cell membrane. The enzyme catalyses di-trans,octa-cis-undecaprenyl diphospho-N-acetyl-alpha-D-muramoyl-L-alanyl-D-glutamyl-meso-2,6-diaminopimeloyl-D-alanyl-D-alanine + UDP-N-acetyl-alpha-D-glucosamine = di-trans,octa-cis-undecaprenyl diphospho-[N-acetyl-alpha-D-glucosaminyl-(1-&gt;4)]-N-acetyl-alpha-D-muramoyl-L-alanyl-D-glutamyl-meso-2,6-diaminopimeloyl-D-alanyl-D-alanine + UDP + H(+). It functions in the pathway cell wall biogenesis; peptidoglycan biosynthesis. Its function is as follows. Cell wall formation. Catalyzes the transfer of a GlcNAc subunit on undecaprenyl-pyrophosphoryl-MurNAc-pentapeptide (lipid intermediate I) to form undecaprenyl-pyrophosphoryl-MurNAc-(pentapeptide)GlcNAc (lipid intermediate II). This chain is UDP-N-acetylglucosamine--N-acetylmuramyl-(pentapeptide) pyrophosphoryl-undecaprenol N-acetylglucosamine transferase, found in Mycolicibacterium paratuberculosis (strain ATCC BAA-968 / K-10) (Mycobacterium paratuberculosis).